Reading from the N-terminus, the 267-residue chain is Phosphate import ATP-binding protein PstB 2 (267 aa).

The ABC transporter domain occupies 21–262; the sequence is LSTKDVHVYY…AKLQSTNDYV (242 aa). Residue 53-60 participates in ATP binding; the sequence is GPSGSGKS.

The protein belongs to the ABC transporter superfamily. Phosphate importer (TC 3.A.1.7) family. The complex is composed of two ATP-binding proteins (PstB), two transmembrane proteins (PstC and PstA) and a solute-binding protein (PstS).

The protein localises to the cell membrane. The catalysed reaction is phosphate(out) + ATP + H2O = ADP + 2 phosphate(in) + H(+). In terms of biological role, part of the ABC transporter complex PstSACB involved in phosphate import. Responsible for energy coupling to the transport system. The polypeptide is Phosphate import ATP-binding protein PstB 2 (Streptococcus pneumoniae serotype 4 (strain ATCC BAA-334 / TIGR4)).